Consider the following 93-residue polypeptide: Integration host factor subunit beta (93 aa).

The protein belongs to the bacterial histone-like protein family. As to quaternary structure, heterodimer of an alpha and a beta chain.

This protein is one of the two subunits of integration host factor, a specific DNA-binding protein that functions in genetic recombination as well as in transcriptional and translational control. In Vibrio vulnificus (strain YJ016), this protein is Integration host factor subunit beta.